Here is a 651-residue protein sequence, read N- to C-terminus: Acetyl-coenzyme A synthetase (651 aa).

CoA contacts are provided by residues 189-192, Thr-311, and Asn-335; that span reads RGGK. ATP contacts are provided by residues 387-389, 411-416, Asp-500, and Arg-515; these read GEP and DTWWQT. Residue Ser-523 coordinates CoA. Arg-526 lines the ATP pocket. The Mg(2+) site is built by Val-537, His-539, and Val-542. Arg-586 contacts CoA. The residue at position 611 (Lys-611) is an N6-acetyllysine.

It belongs to the ATP-dependent AMP-binding enzyme family. Mg(2+) serves as cofactor. Post-translationally, acetylated. Deacetylation by the SIR2-homolog deacetylase activates the enzyme.

It carries out the reaction acetate + ATP + CoA = acetyl-CoA + AMP + diphosphate. Catalyzes the conversion of acetate into acetyl-CoA (AcCoA), an essential intermediate at the junction of anabolic and catabolic pathways. AcsA undergoes a two-step reaction. In the first half reaction, AcsA combines acetate with ATP to form acetyl-adenylate (AcAMP) intermediate. In the second half reaction, it can then transfer the acetyl group from AcAMP to the sulfhydryl group of CoA, forming the product AcCoA. The sequence is that of Acetyl-coenzyme A synthetase from Brucella suis (strain ATCC 23445 / NCTC 10510).